The sequence spans 121 residues: Large ribosomal subunit protein uL14c (121 aa).

Belongs to the universal ribosomal protein uL14 family. In terms of assembly, part of the 50S ribosomal subunit.

Its subcellular location is the plastid. It is found in the chloroplast. Functionally, binds to 23S rRNA. The sequence is that of Large ribosomal subunit protein uL14c from Pelargonium hortorum (Common geranium).